The sequence spans 1643 residues: Lysine-specific demethylase 6B (1643 aa).

Disordered regions lie at residues 52 to 88, 190 to 680, 704 to 807, and 822 to 1096; these read GQPPLPAPLPPSHGSSSGHPSKPYYAPGAPTPRPLHG, AKRG…PLED, ESIR…LKSL, and GAAV…RSLS. 2 stretches are compositionally biased toward low complexity: residues 63-74 and 212-223; these read SHGSSSGHPSKP and AALSGPSGEEGL. Ser-224 bears the Phosphoserine mark. Residues 242-266 show a composition bias toward pro residues; the sequence is PGLPLPPPPLPPPPPPPPPPPPPLP. Over residues 291–307 the composition is skewed to basic and acidic residues; the sequence is GPERKGSAPPERQEQRH. Over residues 332 to 342 the composition is skewed to pro residues; that stretch reads AAPPGPGPRPP. The segment covering 359–370 has biased composition (basic and acidic residues); that stretch reads DLRESRVQRSRM. Residues 394–412 are compositionally biased toward low complexity; the sequence is PGTTTSSSSSSSSNTGLRG. The segment covering 460 to 484 has biased composition (pro residues); that stretch reads SLPPGPSSPPPPPCPRLLRPPPPPA. Low complexity predominate over residues 550–569; that stretch reads TTSSSNSNSGSHSSSPAGPV. Pro residues-rich tracts occupy residues 584–600 and 641–658; these read LPRPPSPAQNPQDPPLV and GPGPPPGPLSKAPQPVPP. Over residues 704 to 714 the composition is skewed to basic and acidic residues; that stretch reads ESIRKEEEQQQ. Low complexity predominate over residues 740 to 764; that stretch reads TAPTTTAPAVAVTTTTTTTTTTTAT. Residues 772–800 show a composition bias toward pro residues; the sequence is PPALPPPPPLAKFPPPSQPQPPPPPPPSP. Residues 843 to 877 show a composition bias toward low complexity; the sequence is SGATALPPTSAAPSAQGSPQPSASSSSQFSTSGGP. Positions 889–904 are enriched in pro residues; sequence VPGPMTPTQPPPPLSL. Basic and acidic residues predominate over residues 916–929; that stretch reads EISRACETLVERVG. Over residues 972 to 989 the composition is skewed to basic residues; that stretch reads CKRRQKEHQKEHRRHRRA. Over residues 990-1003 the composition is skewed to basic and acidic residues; that stretch reads CKDSVGRRPREGRA. Basic residues predominate over residues 1004-1016; sequence KAKAKVPKEKSRR. Residues 1047–1067 are compositionally biased toward pro residues; that stretch reads PTAPAPPSAPAPSAQPTPPSA. Lys-1109 participates in a covalent cross-link: Glycyl lysine isopeptide (Lys-Gly) (interchain with G-Cter in SUMO2). The disordered stretch occupies residues 1288–1325; it reads FQESLQEEKESEDEESEEPDSTTGTPPSSAPDPKNHHI. The segment covering 1296–1307 has biased composition (acidic residues); that stretch reads KESEDEESEEPD. The region spanning 1339–1502 is the JmjC domain; the sequence is RWKPQLQELL…YQLALERYEW (164 aa). Fe cation is bound by residues His-1390, Glu-1392, and His-1470. Residues Cys-1575, Cys-1578, Cys-1602, and Cys-1605 each coordinate Zn(2+).

It belongs to the UTX family. Interacts with TLE1. Component of the MLL4 complex, at least composed of KMT2B/MLL4, ASH2L, RBBP5, WDR5, and KDM6B. Interacts with TBX21, SMARCA4, SMARCC1 and SMARCC2. The cofactor is L-ascorbate. Requires Fe(2+) as cofactor.

The protein localises to the nucleus. It carries out the reaction N(6),N(6),N(6)-trimethyl-L-lysyl(27)-[histone H3] + 2 2-oxoglutarate + 2 O2 = N(6)-methyl-L-lysyl(27)-[histone H3] + 2 formaldehyde + 2 succinate + 2 CO2. Its function is as follows. Histone demethylase that specifically demethylates 'Lys-27' of histone H3, thereby playing a central role in histone code. Demethylates trimethylated and dimethylated H3 'Lys-27'. Plays a central role in regulation of posterior development, by regulating HOX gene expression. Involved in inflammatory response by participating in macrophage differentiation in case of inflammation by regulating gene expression and macrophage differentiation. Plays a demethylase-independent role in chromatin remodeling to regulate T-box family member-dependent gene expression by acting as a link between T-box factors and the SMARCA4-containing SWI/SNF remodeling complex. The sequence is that of Lysine-specific demethylase 6B (KDM6B) from Homo sapiens (Human).